The following is a 235-amino-acid chain: Purine nucleoside phosphorylase DeoD-type (235 aa).

His4 provides a ligand contact to a purine D-ribonucleoside. Residues Gly20, Arg24, Arg43, and 87 to 90 (RVGT) contribute to the phosphate site. A purine D-ribonucleoside contacts are provided by residues Glu162, 179 to 181 (EME), and 203 to 204 (SD). The active-site Proton donor is Asp204.

It belongs to the PNP/UDP phosphorylase family. As to quaternary structure, homohexamer; trimer of homodimers.

The catalysed reaction is a purine D-ribonucleoside + phosphate = a purine nucleobase + alpha-D-ribose 1-phosphate. The enzyme catalyses a purine 2'-deoxy-D-ribonucleoside + phosphate = a purine nucleobase + 2-deoxy-alpha-D-ribose 1-phosphate. Functionally, catalyzes the reversible phosphorolytic breakdown of the N-glycosidic bond in the beta-(deoxy)ribonucleoside molecules, with the formation of the corresponding free purine bases and pentose-1-phosphate. This is Purine nucleoside phosphorylase DeoD-type from Bacillus cytotoxicus (strain DSM 22905 / CIP 110041 / 391-98 / NVH 391-98).